Here is a 71-residue protein sequence, read N- to C-terminus: Small ribosomal subunit protein bS21 (71 aa).

This sequence belongs to the bacterial ribosomal protein bS21 family.

This Buchnera aphidicola subsp. Cinara cedri (strain Cc) protein is Small ribosomal subunit protein bS21.